The primary structure comprises 561 residues: Potassium-transporting ATPase potassium-binding subunit (561 aa).

A run of 10 helical transmembrane segments spans residues 4-24, 65-85, 134-154, 177-197, 253-273, 285-305, 380-400, 417-437, 484-504, and 528-548; these read IIMQ…PLGI, AGSV…VLML, GLTV…FAVI, LYIL…QGVV, FTNL…VVMF, AIMT…TISE, GLYG…LLVG, MVCL…AFAV, MVGA…ALYL, and FIGL…LPAL.

Belongs to the KdpA family. The system is composed of three essential subunits: KdpA, KdpB and KdpC.

Its subcellular location is the cell membrane. In terms of biological role, part of the high-affinity ATP-driven potassium transport (or Kdp) system, which catalyzes the hydrolysis of ATP coupled with the electrogenic transport of potassium into the cytoplasm. This subunit binds the extracellular potassium ions and delivers the ions to the membrane domain of KdpB through an intramembrane tunnel. The chain is Potassium-transporting ATPase potassium-binding subunit from Listeria welshimeri serovar 6b (strain ATCC 35897 / DSM 20650 / CCUG 15529 / CIP 8149 / NCTC 11857 / SLCC 5334 / V8).